The primary structure comprises 396 residues: S-adenosylmethionine synthase (396 aa).

H16 is an ATP binding site. Mg(2+) is bound at residue D18. E44 is a K(+) binding site. The L-methionine site is built by E57 and Q100. A flexible loop region spans residues Q100–K110. Residues D176–K178, R243–F244, D252, R258–K259, A275, and K279 contribute to the ATP site. Residue D252 participates in L-methionine binding. Position 283 (K283) interacts with L-methionine.

It belongs to the AdoMet synthase family. Homotetramer; dimer of dimers. Mg(2+) is required as a cofactor. The cofactor is K(+).

The protein resides in the cytoplasm. The catalysed reaction is L-methionine + ATP + H2O = S-adenosyl-L-methionine + phosphate + diphosphate. Its pathway is amino-acid biosynthesis; S-adenosyl-L-methionine biosynthesis; S-adenosyl-L-methionine from L-methionine: step 1/1. Functionally, catalyzes the formation of S-adenosylmethionine (AdoMet) from methionine and ATP. The overall synthetic reaction is composed of two sequential steps, AdoMet formation and the subsequent tripolyphosphate hydrolysis which occurs prior to release of AdoMet from the enzyme. This chain is S-adenosylmethionine synthase, found in Lachnoclostridium phytofermentans (strain ATCC 700394 / DSM 18823 / ISDg) (Clostridium phytofermentans).